We begin with the raw amino-acid sequence, 169 residues long: Cell division inhibitor SulA (169 aa).

Residues 106–112 form a ftsZ binding region; sequence ALRTGNY. Positions 162–169 are lon protease binding; that stretch reads KIHSNLYH.

It belongs to the SulA family. Interacts with FtsZ. In terms of processing, is rapidly cleaved and degraded by the Lon protease once DNA damage is repaired.

In terms of biological role, component of the SOS system and an inhibitor of cell division. Accumulation of SulA causes rapid cessation of cell division and the appearance of long, non-septate filaments. In the presence of GTP, binds a polymerization-competent form of FtsZ in a 1:1 ratio, thus inhibiting FtsZ polymerization and therefore preventing it from participating in the assembly of the Z ring. This mechanism prevents the premature segregation of damaged DNA to daughter cells during cell division. This Shigella boydii serotype 4 (strain Sb227) protein is Cell division inhibitor SulA.